Reading from the N-terminus, the 358-residue chain is Feruloyl CoA ortho-hydroxylase F6H1-3 (358 aa).

Residues 200 to 308 (TKESLLMGSK…RISVPIFVNP (109 aa)) form the Fe2OG dioxygenase domain. 2-oxoglutarate is bound at residue tyrosine 216. Positions 231, 233, and 289 each coordinate Fe cation. Residues arginine 299 and serine 301 each coordinate 2-oxoglutarate.

The protein belongs to the iron/ascorbate-dependent oxidoreductase family. L-ascorbate is required as a cofactor. Fe(2+) serves as cofactor. Mostly expressed in tubers, and, at low levels, in underground stems, stems, leaves and petioles.

It carries out the reaction (E)-feruloyl-CoA + 2-oxoglutarate + O2 = (E)-6-hydroxyferuloyl-CoA + succinate + CO2. It participates in phenylpropanoid metabolism. 2-oxoglutarate (OG)- and Fe(II)-dependent dioxygenase (2OGD) involved in scopoletin biosynthesis. Converts feruloyl CoA into 6'-hydroxyferuloyl CoA, and, at low efficiency, caffeoyl-CoA into 6'-hydroxycaffeate, but has no activity with p-coumaroyl-CoA. This chain is Feruloyl CoA ortho-hydroxylase F6H1-3, found in Ipomoea batatas (Sweet potato).